A 359-amino-acid chain; its full sequence is Phosphoserine aminotransferase (359 aa).

Arginine 42 serves as a coordination point for L-glutamate. Pyridoxal 5'-phosphate-binding positions include 76 to 77 (AS), tryptophan 102, threonine 152, aspartate 171, and glutamine 194. At lysine 195 the chain carries N6-(pyridoxal phosphate)lysine. 236-237 (NT) provides a ligand contact to pyridoxal 5'-phosphate.

The protein belongs to the class-V pyridoxal-phosphate-dependent aminotransferase family. SerC subfamily. As to quaternary structure, homodimer. Pyridoxal 5'-phosphate is required as a cofactor.

It localises to the cytoplasm. The catalysed reaction is O-phospho-L-serine + 2-oxoglutarate = 3-phosphooxypyruvate + L-glutamate. It catalyses the reaction 4-(phosphooxy)-L-threonine + 2-oxoglutarate = (R)-3-hydroxy-2-oxo-4-phosphooxybutanoate + L-glutamate. It functions in the pathway amino-acid biosynthesis; L-serine biosynthesis; L-serine from 3-phospho-D-glycerate: step 2/3. It participates in cofactor biosynthesis; pyridoxine 5'-phosphate biosynthesis; pyridoxine 5'-phosphate from D-erythrose 4-phosphate: step 3/5. Functionally, catalyzes the reversible conversion of 3-phosphohydroxypyruvate to phosphoserine and of 3-hydroxy-2-oxo-4-phosphonooxybutanoate to phosphohydroxythreonine. In Vesicomyosocius okutanii subsp. Calyptogena okutanii (strain HA), this protein is Phosphoserine aminotransferase.